The chain runs to 596 residues: Sphingomyelinase C 1 (596 aa).

The signal sequence occupies residues 1-36 (MITKRNIPCKKNWKYKKKSISLTLITICYMFLFLTS). Positions 63-118 (KIEDSTNTDPSSNVNEEDENSINANANDNAPSDSDSSNPRSPDKNPVNPTSPNSSS) are disordered. The segment covering 67 to 76 (STNTDPSSNV) has biased composition (polar residues). A compositionally biased stretch (low complexity) spans 83 to 118 (SINANANDNAPSDSDSSNPRSPDKNPVNPTSPNSSS).

It localises to the secreted. It carries out the reaction a sphingomyelin + H2O = phosphocholine + an N-acylsphing-4-enine + H(+). This Leptospira interrogans serogroup Icterohaemorrhagiae serovar copenhageni (strain Fiocruz L1-130) protein is Sphingomyelinase C 1 (sph1).